The primary structure comprises 335 residues: Methionine import ATP-binding protein MetN (335 aa).

The ABC transporter domain occupies 2–241 (IQFQRLHKSY…PQHPTTRRFV (240 aa)). 38-45 (GHSGAGKS) contributes to the ATP binding site.

This sequence belongs to the ABC transporter superfamily. Methionine importer (TC 3.A.1.24) family. In terms of assembly, the complex is composed of two ATP-binding proteins (MetN), two transmembrane proteins (MetI) and a solute-binding protein (MetQ).

Its subcellular location is the cell inner membrane. The enzyme catalyses L-methionine(out) + ATP + H2O = L-methionine(in) + ADP + phosphate + H(+). The catalysed reaction is D-methionine(out) + ATP + H2O = D-methionine(in) + ADP + phosphate + H(+). In terms of biological role, part of the ABC transporter complex MetNIQ involved in methionine import. Responsible for energy coupling to the transport system. The protein is Methionine import ATP-binding protein MetN of Xanthomonas campestris pv. campestris (strain 8004).